Consider the following 146-residue polypeptide: Hemoglobin subunit beta-1 (146 aa).

Positions 2 to 146 (EWSSNERSTI…VISALSRQYF (145 aa)) constitute a Globin domain. Heme b is bound by residues His-63 and His-92.

This sequence belongs to the globin family. As to quaternary structure, heterotetramer of two alpha chains and two beta chains. Red blood cells.

Involved in oxygen transport from gills to the various peripheral tissues. This is Hemoglobin subunit beta-1 (hbb1) from Muraena helena (Mediterranean moray).